Here is a 293-residue protein sequence, read N- to C-terminus: Carbapenem-hydrolyzing beta-lactamase KPC (293 aa).

Residues 1–24 (MSLYRRLVLLSCLSWPLAGFSATA) form the signal peptide. The active-site Acyl-ester intermediate is the Ser-69. Glu-167 functions as the Proton acceptor in the catalytic mechanism. Substrate is bound at residue 233–235 (KTG).

It belongs to the class-A beta-lactamase family.

The enzyme catalyses a beta-lactam + H2O = a substituted beta-amino acid. With respect to regulation, not inhibited by EDTA, inhibited by clavulanic acid and tazobactam. In terms of biological role, hydrolyzes carbapenems, penicillins, cephalosporins and aztreonam with varying efficiency. The sequence is that of Carbapenem-hydrolyzing beta-lactamase KPC (bla) from Klebsiella oxytoca.